Consider the following 172-residue polypeptide: NADH-quinone oxidoreductase subunit B (172 aa).

[4Fe-4S] cluster contacts are provided by cysteine 46, cysteine 47, cysteine 111, and cysteine 141.

This sequence belongs to the complex I 20 kDa subunit family. As to quaternary structure, NDH-1 is composed of 14 different subunits. Subunits NuoB, C, D, E, F, and G constitute the peripheral sector of the complex. It depends on [4Fe-4S] cluster as a cofactor.

It is found in the cell membrane. It catalyses the reaction a quinone + NADH + 5 H(+)(in) = a quinol + NAD(+) + 4 H(+)(out). Its function is as follows. NDH-1 shuttles electrons from NADH, via FMN and iron-sulfur (Fe-S) centers, to quinones in the respiratory chain. The immediate electron acceptor for the enzyme in this species is believed to be a menaquinone. Couples the redox reaction to proton translocation (for every two electrons transferred, four hydrogen ions are translocated across the cytoplasmic membrane), and thus conserves the redox energy in a proton gradient. The polypeptide is NADH-quinone oxidoreductase subunit B (Bacillus mycoides (strain KBAB4) (Bacillus weihenstephanensis)).